The chain runs to 263 residues: Probable ribosomal RNA small subunit methyltransferase A (263 aa).

Leucine 12, glycine 37, glutamate 58, aspartate 83, and asparagine 100 together coordinate S-adenosyl-L-methionine.

The protein belongs to the class I-like SAM-binding methyltransferase superfamily. rRNA adenine N(6)-methyltransferase family. RsmA subfamily.

Its subcellular location is the cytoplasm. Specifically dimethylates two adjacent adenosines in the loop of a conserved hairpin near the 3'-end of 16S rRNA in the 30S particle. May play a critical role in biogenesis of 30S subunits. The polypeptide is Probable ribosomal RNA small subunit methyltransferase A (Methanococcus maripaludis (strain C6 / ATCC BAA-1332)).